The sequence spans 720 residues: Aminopeptidase RNPEPL1 (720 aa).

321–325 (VAMEN) is a binding site for substrate. H348 lines the Zn(2+) pocket. E349 serves as the catalytic Proton acceptor. Zn(2+) is bound by residues H352 and E371. Residues 671–708 (GLGPSAEPSTEPSTDLGGAEADTNPDSPALLLGDEAPS) are disordered.

It belongs to the peptidase M1 family. Requires Zn(2+) as cofactor.

It catalyses the reaction Release of N-terminal amino acids, preferentially methionine, from peptides and arylamides.. Its function is as follows. Broad specificity aminopeptidase which preferentially hydrolyzes an N-terminal methionine, citrulline or glutamine. This chain is Aminopeptidase RNPEPL1, found in Mus musculus (Mouse).